The sequence spans 317 residues: L-lactate dehydrogenase (317 aa).

Residues V17, D38, K43, Y69, and 83–84 (GA) each bind NAD(+). Q86 and R92 together coordinate substrate. NAD(+) contacts are provided by residues S105, 122-124 (ATN), and S147. 124–127 (NPVD) serves as a coordination point for substrate. 152–155 (DTAR) provides a ligand contact to substrate. Positions 157 and 172 each coordinate beta-D-fructose 1,6-bisphosphate. Residue H179 is the Proton acceptor of the active site. Position 224 is a phosphotyrosine (Y224). A substrate-binding site is contributed by T233.

This sequence belongs to the LDH/MDH superfamily. LDH family. As to quaternary structure, homotetramer.

Its subcellular location is the cytoplasm. It carries out the reaction (S)-lactate + NAD(+) = pyruvate + NADH + H(+). It functions in the pathway fermentation; pyruvate fermentation to lactate; (S)-lactate from pyruvate: step 1/1. With respect to regulation, allosterically activated by fructose 1,6-bisphosphate (FBP). Its function is as follows. Catalyzes the conversion of lactate to pyruvate. The chain is L-lactate dehydrogenase from Bacillus caldolyticus.